A 435-amino-acid chain; its full sequence is Adenylosuccinate synthetase (435 aa).

GTP is bound by residues 17 to 23 and 45 to 47; these read GDEGKGK and GHT. Aspartate 18 serves as the catalytic Proton acceptor. Mg(2+) is bound by residues aspartate 18 and glycine 45. IMP contacts are provided by residues 18–21, 43–46, threonine 135, arginine 149, glutamine 230, threonine 245, and arginine 309; these read DEGK and NAGH. Histidine 46 (proton donor) is an active-site residue. Substrate is bound at residue 305–311; the sequence is TVSGRAR. GTP-binding positions include arginine 311, 337–339, and 419–421; these read LLD and SVG.

The protein belongs to the adenylosuccinate synthetase family. In terms of assembly, homodimer. Requires Mg(2+) as cofactor.

The protein localises to the cytoplasm. It catalyses the reaction IMP + L-aspartate + GTP = N(6)-(1,2-dicarboxyethyl)-AMP + GDP + phosphate + 2 H(+). It functions in the pathway purine metabolism; AMP biosynthesis via de novo pathway; AMP from IMP: step 1/2. Its function is as follows. Plays an important role in the de novo pathway of purine nucleotide biosynthesis. Catalyzes the first committed step in the biosynthesis of AMP from IMP. This chain is Adenylosuccinate synthetase, found in Spiroplasma citri.